A 102-amino-acid chain; its full sequence is Urease subunit beta (102 aa).

The protein belongs to the urease beta subunit family. In terms of assembly, heterotrimer of UreA (gamma), UreB (beta) and UreC (alpha) subunits. Three heterotrimers associate to form the active enzyme.

Its subcellular location is the cytoplasm. The catalysed reaction is urea + 2 H2O + H(+) = hydrogencarbonate + 2 NH4(+). The protein operates within nitrogen metabolism; urea degradation; CO(2) and NH(3) from urea (urease route): step 1/1. The polypeptide is Urease subunit beta (Acinetobacter baumannii (strain ACICU)).